Here is a 189-residue protein sequence, read N- to C-terminus: Peroxiredoxin sll1621 (189 aa).

One can recognise a Thioredoxin domain in the interval 2-177; it reads TPERVPSVVF…MLAYLKGAEA (176 aa). C55 (cysteine sulfenic acid (-SOH) intermediate (for peroxiredoxin activity)) is an active-site residue.

This sequence belongs to the peroxiredoxin family. Prx5 subfamily. As to quaternary structure, monomer.

It carries out the reaction a hydroperoxide + 2 glutathione = an alcohol + glutathione disulfide + H2O. Functionally, thiol-specific peroxidase that catalyzes the reduction of hydrogen peroxide and organic hydroperoxides to water and alcohols, respectively. Plays a role in cell protection against oxidative stress by detoxifying peroxides. The protein is Peroxiredoxin sll1621 of Synechocystis sp. (strain ATCC 27184 / PCC 6803 / Kazusa).